The following is a 315-amino-acid chain: Protoheme IX farnesyltransferase 1 (315 aa).

9 helical membrane passes run 25–45 (PGIIFGNLISVAGGFLLAAKG), 49–69 (LALMLASLVGLSLVVASGCAV), 87–107 (RVTVTGEIAVGNVLAFGLALG), 120–139 (ALALLFAVIGYIVYVGVYSL), 145–165 (SVYGTLVGSFSGAVPPVVGYC), 176–196 (AILLLMFSLWQMPHSYAIAIF), 220–240 (LHIVLYIAVFALVSALLPLAG), 242–262 (TGIAFMAVTCATSLWWLAMAL), and 280–300 (GFSIITIMALSITMALDSQVI).

Belongs to the UbiA prenyltransferase family. Protoheme IX farnesyltransferase subfamily.

It localises to the cell inner membrane. It carries out the reaction heme b + (2E,6E)-farnesyl diphosphate + H2O = Fe(II)-heme o + diphosphate. The protein operates within porphyrin-containing compound metabolism; heme O biosynthesis; heme O from protoheme: step 1/1. Its function is as follows. Converts heme B (protoheme IX) to heme O by substitution of the vinyl group on carbon 2 of heme B porphyrin ring with a hydroxyethyl farnesyl side group. The chain is Protoheme IX farnesyltransferase 1 from Shewanella sp. (strain W3-18-1).